The sequence spans 354 residues: Serum paraoxonase/arylesterase 2 (354 aa).

Cysteine 42 and cysteine 352 are joined by a disulfide. Ca(2+) contacts are provided by glutamate 53 and aspartate 54. Catalysis depends on histidine 114, which acts as the Proton acceptor. Ca(2+) is bound by residues isoleucine 116, asparagine 167, aspartate 168, and asparagine 223. N-linked (GlcNAc...) asparagine glycosylation is present at asparagine 254. The Ca(2+) site is built by aspartate 268 and asparagine 269. Residues asparagine 269 and asparagine 323 are each glycosylated (N-linked (GlcNAc...) asparagine).

This sequence belongs to the paraoxonase family. Homotrimer. It depends on Ca(2+) as a cofactor. Glycosylated. In terms of processing, the signal sequence is not cleaved.

Its subcellular location is the membrane. The catalysed reaction is a phenyl acetate + H2O = a phenol + acetate + H(+). It carries out the reaction an N-acyl-L-homoserine lactone + H2O = an N-acyl-L-homoserine + H(+). Its function is as follows. Capable of hydrolyzing lactones and a number of aromatic carboxylic acid esters. The polypeptide is Serum paraoxonase/arylesterase 2 (Pon2) (Rattus norvegicus (Rat)).